Consider the following 257-residue polypeptide: Ribosomal RNA small subunit methyltransferase J (257 aa).

S-adenosyl-L-methionine is bound by residues 107-108 (RD), 123-124 (ER), and aspartate 177.

The protein belongs to the methyltransferase superfamily. RsmJ family.

Its subcellular location is the cytoplasm. It carries out the reaction guanosine(1516) in 16S rRNA + S-adenosyl-L-methionine = N(2)-methylguanosine(1516) in 16S rRNA + S-adenosyl-L-homocysteine + H(+). Its function is as follows. Specifically methylates the guanosine in position 1516 of 16S rRNA. This is Ribosomal RNA small subunit methyltransferase J from Haemophilus influenzae (strain PittGG).